Reading from the N-terminus, the 984-residue chain is Ephrin type-B receptor 1 (984 aa).

A signal peptide spans 1–17 (MALDYLLLLLLASAVAA). Residues 18–540 (MEETLMDTRT…YKSELREQLP (523 aa)) lie on the Extracellular side of the membrane. Residues 19 to 201 (EETLMDTRTA…FFKKCPSIVQ (183 aa)) enclose the Eph LBD domain. 2 consecutive Fibronectin type-III domains span residues 322–432 (VPSG…TNQA) and 433–528 (APST…TLTD). 3 N-linked (GlcNAc...) asparagine glycosylation sites follow: Asn334, Asn426, and Asn480. Residues 541-563 (LIAGSAAAGVVFVVSLVAISIVC) traverse the membrane as a helical segment. Over 564–984 (SRKRAYSKEA…QISQSPTAMA (421 aa)) the chain is Cytoplasmic. Tyr600 is modified (phosphotyrosine). The Protein kinase domain maps to 619 to 882 (VKIEEVIGAG…EIVNTLDKMI (264 aa)). ATP contacts are provided by residues 625-633 (IGAGEFGEV) and Lys651. The Proton acceptor role is filled by Asp744. One can recognise an SAM domain in the interval 911-975 (TAFTTVDDWL…LNSIHSMRVQ (65 aa)). At Tyr928 the chain carries Phosphotyrosine; by autocatalysis. Positions 982–984 (AMA) match the PDZ-binding motif.

The protein belongs to the protein kinase superfamily. Tyr protein kinase family. Ephrin receptor subfamily. As to quaternary structure, heterotetramer upon binding of the ligand. The heterotetramer is composed of an ephrin dimer and a receptor dimer. Oligomerization is probably required to induce biological responses. Interacts with EPHB6; transphosphorylates EPHB6 to form an active signaling complex. Interacts with PICK1. Interacts (through Tyr-594) with NCK1 (via SH2 domain); activates the JUN cascade to regulate cell adhesion. The ligand-activated form interacts (through Tyr-928) with GRB7 and GRB10 (via SH2 domains). The ligand-activated form interacts (residues within the catalytic domain) with GRB2 (via SH2 domain). Interacts with GRB2, SHC1 and SRC; activates the MAPK/ERK cascade to regulate cell migration. Interacts with CBL; regulates receptor degradation through ubiquitination. Interacts with ACP1. Post-translationally, phosphorylated. Autophosphorylation is stimulated by the ligand EFNB1. Required for interaction with SH2 domain-containing interactors, for activation of the MAPK/ERK and JUN signaling cascades and for ubiquitination by CBL. In terms of processing, ubiquitinated; (EFNB1)ligand-induced poly- and/or multi-ubiquitination by CBL is regulated by SRC and leads to lysosomal degradation. As to expression, preferentially expressed in brain.

The protein resides in the cell membrane. The protein localises to the early endosome membrane. It is found in the cell projection. It localises to the dendrite. It catalyses the reaction L-tyrosyl-[protein] + ATP = O-phospho-L-tyrosyl-[protein] + ADP + H(+). Receptor tyrosine kinase which binds promiscuously transmembrane ephrin-B family ligands residing on adjacent cells, leading to contact-dependent bidirectional signaling into neighboring cells. The signaling pathway downstream of the receptor is referred to as forward signaling while the signaling pathway downstream of the ephrin ligand is referred to as reverse signaling. Cognate/functional ephrin ligands for this receptor include EFNB1, EFNB2 and EFNB3. During nervous system development, regulates retinal axon guidance redirecting ipsilaterally ventrotemporal retinal ganglion cells axons at the optic chiasm midline. This probably requires repulsive interaction with EFNB2. In the adult nervous system together with EFNB3, regulates chemotaxis, proliferation and polarity of the hippocampus neural progenitors. In addition to its role in axon guidance also plays an important redundant role with other ephrin-B receptors in development and maturation of dendritic spines and synapse formation. May also regulate angiogenesis. More generally, may play a role in targeted cell migration and adhesion. Upon activation by EFNB1 and probably other ephrin-B ligands activates the MAPK/ERK and the JNK signaling cascades to regulate cell migration and adhesion respectively. Involved in the maintenance of the pool of satellite cells (muscle stem cells) by promoting their self-renewal and reducing their activation and differentiation. The chain is Ephrin type-B receptor 1 (EPHB1) from Homo sapiens (Human).